We begin with the raw amino-acid sequence, 185 residues long: Intraflagellar transport protein 22 homolog (185 aa).

GTP is bound by residues 10-17, 63-67, and 123-126; these read GPCESGKT, DCGGD, and HKPG.

Belongs to the small GTPase superfamily. Rab family. Component of the IFT complex B, at least composed of IFT20, IFT22, IFT25, IFT27, IFT46, IFT52, TRAF3IP1/IFT54, IFT57, IFT74, IFT80, IFT81, and IFT88. Interacts with IFT88. Interacts with CFAP61.

Its subcellular location is the cell projection. It is found in the cilium. In terms of biological role, small GTPase-like component of the intraflagellar transport (IFT) complex B. The sequence is that of Intraflagellar transport protein 22 homolog (IFT22) from Bos taurus (Bovine).